Consider the following 87-residue polypeptide: U3-theraphotoxin-Hhn1i (87 aa).

The first 24 residues, 1 to 24 (MVNMEASMFLTFAGLVLLFVVCYA), serve as a signal peptide directing secretion. Residues 25–52 (SESEEKEFPKEMLSSIFAVDNDFKQEER) constitute a propeptide that is removed on maturation. 3 cysteine pairs are disulfide-bonded: C54–C67, C61–C72, and C66–C79.

The protein belongs to the neurotoxin 10 (Hwtx-1) family. 51 (Hntx-8) subfamily. Hntx-8 sub-subfamily. In terms of tissue distribution, expressed by the venom gland.

It is found in the secreted. Ion channel inhibitor. This chain is U3-theraphotoxin-Hhn1i, found in Cyriopagopus hainanus (Chinese bird spider).